The sequence spans 278 residues: Large ribosomal subunit protein uL2 (278 aa).

The interval 222–264 is disordered; sequence GVAMNPIDHPHGGGEGRTSGGRHPVTPWGKPTKGRKTRKNKAT.

This sequence belongs to the universal ribosomal protein uL2 family. Part of the 50S ribosomal subunit. Forms a bridge to the 30S subunit in the 70S ribosome.

One of the primary rRNA binding proteins. Required for association of the 30S and 50S subunits to form the 70S ribosome, for tRNA binding and peptide bond formation. It has been suggested to have peptidyltransferase activity; this is somewhat controversial. Makes several contacts with the 16S rRNA in the 70S ribosome. The polypeptide is Large ribosomal subunit protein uL2 (Phenylobacterium zucineum (strain HLK1)).